We begin with the raw amino-acid sequence, 186 residues long: ATP-dependent protease subunit HslV (186 aa).

The active site involves T14. Na(+) contacts are provided by A168, C171, and T174.

Belongs to the peptidase T1B family. HslV subfamily. In terms of assembly, a double ring-shaped homohexamer of HslV is capped on each side by a ring-shaped HslU homohexamer. The assembly of the HslU/HslV complex is dependent on binding of ATP.

It is found in the cytoplasm. The enzyme catalyses ATP-dependent cleavage of peptide bonds with broad specificity.. Allosterically activated by HslU binding. Its function is as follows. Protease subunit of a proteasome-like degradation complex believed to be a general protein degrading machinery. This Bradyrhizobium sp. (strain BTAi1 / ATCC BAA-1182) protein is ATP-dependent protease subunit HslV.